The chain runs to 70 residues: ATP synthase subunit c (70 aa).

A run of 2 helical transmembrane segments spans residues 4–24 and 47–67; these read IATA…NGLI and FIGI…GFLL.

The protein belongs to the ATPase C chain family. In terms of assembly, F-type ATPases have 2 components, F(1) - the catalytic core - and F(0) - the membrane proton channel. F(1) has five subunits: alpha(3), beta(3), gamma(1), delta(1), epsilon(1). F(0) has three main subunits: a(1), b(2) and c(10-14). The alpha and beta chains form an alternating ring which encloses part of the gamma chain. F(1) is attached to F(0) by a central stalk formed by the gamma and epsilon chains, while a peripheral stalk is formed by the delta and b chains.

Its subcellular location is the cell membrane. F(1)F(0) ATP synthase produces ATP from ADP in the presence of a proton or sodium gradient. F-type ATPases consist of two structural domains, F(1) containing the extramembraneous catalytic core and F(0) containing the membrane proton channel, linked together by a central stalk and a peripheral stalk. During catalysis, ATP synthesis in the catalytic domain of F(1) is coupled via a rotary mechanism of the central stalk subunits to proton translocation. Its function is as follows. Key component of the F(0) channel; it plays a direct role in translocation across the membrane. A homomeric c-ring of between 10-14 subunits forms the central stalk rotor element with the F(1) delta and epsilon subunits. This Exiguobacterium sibiricum (strain DSM 17290 / CCUG 55495 / CIP 109462 / JCM 13490 / 255-15) protein is ATP synthase subunit c.